The sequence spans 256 residues: Lysine-rich coiled-coil protein 1 (256 aa).

Disordered stretches follow at residues 61-83 (QRIPSGTNHSYPRSCSSSQTEDR) and 141-256 (GHST…ILGF). Polar residues-rich tracts occupy residues 64-79 (PSGTNHSYPRSCSSSQ) and 141-153 (GHSTIDPQVSHRQ). Composition is skewed to basic and acidic residues over residues 161 to 188 (HLEEGRERQEERPKHERKRSSEEMDLNK) and 218 to 227 (KNRDVSSKKE). The stretch at 208–247 (TEKLKNRKEKKNRDVSSKKEDRKRRKEKKEQGEERTEEEM) forms a coiled coil.

The protein is Lysine-rich coiled-coil protein 1 (Krcc1) of Rattus norvegicus (Rat).